Here is a 748-residue protein sequence, read N- to C-terminus: Catalase-peroxidase (748 aa).

Residues 1 to 14 (MTDTSDARPPHSDA) show a composition bias toward basic and acidic residues. A disordered region spans residues 1–40 (MTDTSDARPPHSDAKTASNSESENPAIDSPEPKSHAPLTN). Positions 112–239 (WHAAGTYRIF…FGATTMGLIY (128 aa)) form a cross-link, tryptophyl-tyrosyl-methioninium (Trp-Tyr) (with M-265). The active-site Proton acceptor is the His113. Residues 239–265 (YVNPEGPEGKPDPLAAAHDIRETFGRM) constitute a cross-link (tryptophyl-tyrosyl-methioninium (Tyr-Met) (with W-112)). Residue His280 coordinates heme b.

The protein belongs to the peroxidase family. Peroxidase/catalase subfamily. In terms of assembly, homodimer or homotetramer. Requires heme b as cofactor. Post-translationally, formation of the three residue Trp-Tyr-Met cross-link is important for the catalase, but not the peroxidase activity of the enzyme.

The enzyme catalyses H2O2 + AH2 = A + 2 H2O. It carries out the reaction 2 H2O2 = O2 + 2 H2O. In terms of biological role, bifunctional enzyme with both catalase and broad-spectrum peroxidase activity. The chain is Catalase-peroxidase from Mycolicibacterium gilvum (strain PYR-GCK) (Mycobacterium gilvum (strain PYR-GCK)).